A 232-amino-acid chain; its full sequence is Ras-related protein RabP (232 aa).

15 to 22 lines the GTP pocket; sequence GNYGVGKS. The short motif at 35–40 is the Effector region element; it reads DNTTGF. GTP-binding positions include 58–62 and 118–121; these read DTSGQ and NKFD. Residues cysteine 229 and cysteine 230 are each lipidated (S-geranylgeranyl cysteine).

The protein belongs to the small GTPase superfamily. Rab family.

It is found in the cell membrane. In Dictyostelium discoideum (Social amoeba), this protein is Ras-related protein RabP (rabP).